An 829-amino-acid chain; its full sequence is Receptor-type tyrosine-protein phosphatase alpha (829 aa).

The signal sequence occupies residues 1–19 (MDSWFILVLFGSGLIHVSA). Residues 20–142 (NNATTVSPSL…ETFPPADETP (123 aa)) are Extracellular-facing. N-linked (GlcNAc...) asparagine glycosylation is found at Asn-21, Asn-47, Asn-51, Asn-68, Asn-80, Asn-86, Asn-104, and Asn-124. The disordered stretch occupies residues 79 to 106 (VNSSHSDNGTRRAASTESGGTTISPNGS). Residues 143–166 (IIAVMVALSSLLVIVFIIIVLYML) traverse the membrane as a helical segment. The Cytoplasmic segment spans residues 167–829 (RFKKYKQAGS…DAFSDYANFK (663 aa)). Phosphoserine is present on residues Ser-202 and Ser-204. Tyrosine-protein phosphatase domains are found at residues 232-528 (FREE…LLEH) and 560-818 (LEEE…VQEY). Substrate-binding positions include Asp-437, 469–475 (CSAGVGR), and Gln-513. Cys-469 functions as the Phosphocysteine intermediate in the catalytic mechanism. Cys-759 acts as the Phosphocysteine intermediate in catalysis. Tyr-825 carries the post-translational modification Phosphotyrosine.

Belongs to the protein-tyrosine phosphatase family. Receptor class 4 subfamily. Part of a complex comprised of PTPRA, BCAR1, BCAR3 (via SH2 domain), and SRC. Within the complex, interacts (when phosphorylated on Tyr-825) with BCAR3 (via SH2 domain). Interacts with GRB2. Post-translationally, integrin binding to extracellular matrix induces phosphorylation at Tyr-825 which induces PTPRA localization and recruitment of BCAR3, BCAR1 and CRK to focal adhesions. As to expression, widely expressed. Highest expression in brain and kidney.

The protein resides in the cell membrane. It is found in the cell junction. It localises to the focal adhesion. The enzyme catalyses O-phospho-L-tyrosyl-[protein] + H2O = L-tyrosyl-[protein] + phosphate. In terms of biological role, tyrosine protein phosphatase which is involved in integrin-mediated focal adhesion formation. Following integrin engagement, specifically recruits BCAR3, BCAR1 and CRK to focal adhesions thereby promoting SRC-mediated phosphorylation of BRAC1 and the subsequent activation of PAK and small GTPase RAC1 and CDC42. In Mus musculus (Mouse), this protein is Receptor-type tyrosine-protein phosphatase alpha (Ptpra).